Consider the following 807-residue polypeptide: Leucine-rich repeat-containing protein 41 (807 aa).

An interaction with Elongin BC complex region spans residues 45 to 54 (ALFELCGRAV). Phosphoserine is present on residues Ser155, Ser276, and Ser326. Disordered regions lie at residues 269-290 (ASRG…RRPR), 304-335 (TRRK…AIGG), and 349-403 (ASGT…GSGA). Thr327 is modified (phosphothreonine). Residues 352–381 (TKQPSAPAAASASSSTSSKRAPASSASQPK) are compositionally biased toward low complexity. At Ser368 the chain carries Phosphoserine. The span at 382–396 (PLKRFKRAAGKKGPR) shows a compositional bias: basic residues. LRR repeat units follow at residues 482-502 (WVSL…IFRL), 513-525 (AGCR…LSDL), 526-550 (FSPL…VLSI), 608-632 (SGSL…LVLQ), 638-661 (NLSL…VLFL), 696-723 (NSTL…VFSE), and 726-747 (SSSL…LLEF).

In terms of assembly, part of an E3 ubiquitin-protein ligase complex with Elongin BC (ELOB and ELOC), RBX1 and CUL5. Component of a probable ECS(LRRC41) complex which contains CUL5, RNF7/RBX2, Elongin BC and LRRC41. Interacts with CUL5, RNF7, ELOB and ELOC.

Its pathway is protein modification; protein ubiquitination. In terms of biological role, probable substrate recognition component of an ECS (Elongin BC-CUL2/5-SOCS-box protein) E3 ubiquitin ligase complex which mediates the ubiquitination and subsequent proteasomal degradation of target proteins. This Mus musculus (Mouse) protein is Leucine-rich repeat-containing protein 41 (Lrrc41).